A 732-amino-acid chain; its full sequence is uncharacterized protein (732 aa).

2 disordered regions span residues 38-90 (TTLA…NNNK) and 226-629 (EESP…MDYQ). The span at 47 to 56 (QQQQQQQQQQ) shows a compositional bias: low complexity. Polar residues predominate over residues 57-76 (PPSSSTTKEGGATTTQDNKL). Low complexity-rich tracts occupy residues 77–89 (TANG…NNNN), 231–247 (TTTT…TTAA), and 254–318 (TTTT…GTNS). Over residues 327-338 (KAKKGVPKKAPT) the composition is skewed to basic residues. Low complexity-rich tracts occupy residues 339 to 383 (KKQP…APKT), 401 to 421 (KTSK…STTK), and 487 to 523 (SAST…IKSK). The span at 553–566 (AAAEEQEEEEEEDN) shows a compositional bias: acidic residues. Low complexity-rich tracts occupy residues 567–577 (SNGIQNNNSSN) and 593–609 (DNFS…NGLL). The span at 610–621 (SEDDDDDDDDDN) shows a compositional bias: acidic residues.

This is an uncharacterized protein from Dictyostelium discoideum (Social amoeba).